A 404-amino-acid polypeptide reads, in one-letter code: S-adenosylmethionine synthase (404 aa).

Position 139-144 (Gly-139–Asp-144) interacts with ATP.

It belongs to the AdoMet synthase 2 family. Mg(2+) serves as cofactor.

The enzyme catalyses L-methionine + ATP + H2O = S-adenosyl-L-methionine + phosphate + diphosphate. The protein operates within amino-acid biosynthesis; S-adenosyl-L-methionine biosynthesis; S-adenosyl-L-methionine from L-methionine: step 1/1. Catalyzes the formation of S-adenosylmethionine from methionine and ATP. The protein is S-adenosylmethionine synthase of Saccharolobus solfataricus (strain ATCC 35092 / DSM 1617 / JCM 11322 / P2) (Sulfolobus solfataricus).